The sequence spans 456 residues: 3-isopropylmalate dehydratase large subunit (456 aa).

Positions 336, 396, and 399 each coordinate [4Fe-4S] cluster.

This sequence belongs to the aconitase/IPM isomerase family. LeuC type 1 subfamily. In terms of assembly, heterodimer of LeuC and LeuD. Requires [4Fe-4S] cluster as cofactor.

It catalyses the reaction (2R,3S)-3-isopropylmalate = (2S)-2-isopropylmalate. It participates in amino-acid biosynthesis; L-leucine biosynthesis; L-leucine from 3-methyl-2-oxobutanoate: step 2/4. Catalyzes the isomerization between 2-isopropylmalate and 3-isopropylmalate, via the formation of 2-isopropylmaleate. The protein is 3-isopropylmalate dehydratase large subunit of Staphylococcus haemolyticus (strain JCSC1435).